The chain runs to 203 residues: Imidazoleglycerol-phosphate dehydratase (203 aa).

The protein belongs to the imidazoleglycerol-phosphate dehydratase family.

It is found in the cytoplasm. It carries out the reaction D-erythro-1-(imidazol-4-yl)glycerol 3-phosphate = 3-(imidazol-4-yl)-2-oxopropyl phosphate + H2O. It participates in amino-acid biosynthesis; L-histidine biosynthesis; L-histidine from 5-phospho-alpha-D-ribose 1-diphosphate: step 6/9. The chain is Imidazoleglycerol-phosphate dehydratase from Helicobacter hepaticus (strain ATCC 51449 / 3B1).